The primary structure comprises 186 residues: Large ribosomal subunit protein uL22 (186 aa).

A disordered region spans residues 161-186; that stretch reads VDDEPAKKKLSKKKLQRQKEKMLRSE. Basic and acidic residues predominate over residues 177–186; the sequence is RQKEKMLRSE.

This sequence belongs to the universal ribosomal protein uL22 family.

The protein is Large ribosomal subunit protein uL22 (RpL17) of Drosophila pseudoobscura pseudoobscura (Fruit fly).